The chain runs to 460 residues: Argininosuccinate lyase (460 aa).

It belongs to the lyase 1 family. Argininosuccinate lyase subfamily.

It localises to the cytoplasm. The catalysed reaction is 2-(N(omega)-L-arginino)succinate = fumarate + L-arginine. The protein operates within amino-acid biosynthesis; L-arginine biosynthesis; L-arginine from L-ornithine and carbamoyl phosphate: step 3/3. This Parvibaculum lavamentivorans (strain DS-1 / DSM 13023 / NCIMB 13966) protein is Argininosuccinate lyase.